A 384-amino-acid polypeptide reads, in one-letter code: Galactokinase (384 aa).

34–37 (EHTD) provides a ligand contact to substrate. 123–129 (SSGLSSS) serves as a coordination point for ATP. Mg(2+) is bound by residues Ser-129 and Glu-161. Asp-173 serves as the catalytic Proton acceptor. Residue Tyr-222 participates in substrate binding.

Belongs to the GHMP kinase family. GalK subfamily.

The protein localises to the cytoplasm. It carries out the reaction alpha-D-galactose + ATP = alpha-D-galactose 1-phosphate + ADP + H(+). Its pathway is carbohydrate metabolism; galactose metabolism. Functionally, catalyzes the transfer of the gamma-phosphate of ATP to D-galactose to form alpha-D-galactose-1-phosphate (Gal-1-P). This chain is Galactokinase, found in Actinobacillus pleuropneumoniae (Haemophilus pleuropneumoniae).